The following is a 311-amino-acid chain: Probable flavin reductase (311 aa).

Residues 38-41 (TANS), 55-61 (CLAKSSR), 88-89 (FA), and Arg-95 each bind FMN.

It belongs to the non-flavoprotein flavin reductase family.

This Rhizobium meliloti (strain 1021) (Ensifer meliloti) protein is Probable flavin reductase.